A 198-amino-acid chain; its full sequence is Recombination protein RecR (198 aa).

The segment at 57-72 (CSVCGHITDQDPCAIC) adopts a C4-type zinc-finger fold. The Toprim domain maps to 80-175 (SLICVVQDPK…RTTRIAHGLP (96 aa)).

This sequence belongs to the RecR family.

Functionally, may play a role in DNA repair. It seems to be involved in an RecBC-independent recombinational process of DNA repair. It may act with RecF and RecO. The sequence is that of Recombination protein RecR from Oceanobacillus iheyensis (strain DSM 14371 / CIP 107618 / JCM 11309 / KCTC 3954 / HTE831).